The primary structure comprises 219 residues: Cytochrome c oxidase assembly protein CtaG (219 aa).

Polar residues predominate over residues 1–13 (MDATDQGKSTSTT). The interval 1–24 (MDATDQGKSTSTTAAQAAPGKAAP) is disordered. The Cytoplasmic portion of the chain corresponds to 1-29 (MDATDQGKSTSTTAAQAAPGKAAPRRGIG). Over residues 14–24 (AAQAAPGKAAP) the composition is skewed to low complexity. The chain crosses the membrane as a helical; Signal-anchor for type II membrane protein span at residues 30–52 (RDALVGGICGAVVVLMIGASYAA). At 53-219 (VPFYNWFCRA…GEPDKPRGSL (167 aa)) the chain is on the periplasmic side.

This sequence belongs to the COX11/CtaG family.

It is found in the cell inner membrane. Its function is as follows. Exerts its effect at some terminal stage of cytochrome c oxidase synthesis, probably by being involved in the insertion of the copper B into subunit I. The protein is Cytochrome c oxidase assembly protein CtaG of Bradyrhizobium sp. (strain ORS 278).